Reading from the N-terminus, the 172-residue chain is Transcriptional repressor NrdR (172 aa).

A zinc finger lies at 3-34 (CPFCSYSDNRVLESRLAEEGESVRRRRECKQC). Residues 49-139 (TVVIKRNGRR…VYRKFKGVAD (91 aa)) form the ATP-cone domain.

Belongs to the NrdR family. The cofactor is Zn(2+).

In terms of biological role, negatively regulates transcription of bacterial ribonucleotide reductase nrd genes and operons by binding to NrdR-boxes. The chain is Transcriptional repressor NrdR from Gloeobacter violaceus (strain ATCC 29082 / PCC 7421).